The sequence spans 335 residues: uncharacterized protein (335 aa).

Solcar repeat units lie at residues 22–129, 134–227, and 244–327; these read VKPI…LLPL, GFPA…IRLF, and KDLY…TKKY. A run of 6 helical transmembrane segments spans residues 28 to 48, 104 to 123, 133 to 154, 195 to 219, 246 to 263, and 307 to 323; these read MLSA…LDVV, GLVP…FLGY, WGFP…ATIV, GILN…FYWW, LYIN…ATLL, and CVKV…SYHL.

It belongs to the mitochondrial carrier (TC 2.A.29) family.

The protein localises to the mitochondrion inner membrane. This is an uncharacterized protein from Schizosaccharomyces pombe (strain 972 / ATCC 24843) (Fission yeast).